A 482-amino-acid polypeptide reads, in one-letter code: Adenylyltransferase and sulfurtransferase MOCS3-2 (482 aa).

ATP is bound by residues Gly125, Asp146, 153-157 (NNLHR), Lys170, and 214-215 (DN). Zn(2+) contacts are provided by Cys255 and Cys258. The active-site Glycyl thioester intermediate; for adenylyltransferase activity is Cys272. The Zn(2+) site is built by Cys330 and Cys333. The Rhodanese domain maps to 385–480 (DGEPHLLLDV…WGQDVDPDFP (96 aa)). Catalysis depends on Cys440, which acts as the Cysteine persulfide intermediate; for sulfurtransferase activity.

This sequence in the N-terminal section; belongs to the HesA/MoeB/ThiF family. UBA4 subfamily. It depends on Zn(2+) as a cofactor.

Its subcellular location is the cytoplasm. The catalysed reaction is [molybdopterin-synthase sulfur-carrier protein]-C-terminal Gly-Gly + ATP + H(+) = [molybdopterin-synthase sulfur-carrier protein]-C-terminal Gly-Gly-AMP + diphosphate. The enzyme catalyses [molybdopterin-synthase sulfur-carrier protein]-C-terminal Gly-Gly-AMP + S-sulfanyl-L-cysteinyl-[cysteine desulfurase] + AH2 = [molybdopterin-synthase sulfur-carrier protein]-C-terminal-Gly-aminoethanethioate + L-cysteinyl-[cysteine desulfurase] + A + AMP + 2 H(+). It functions in the pathway tRNA modification; 5-methoxycarbonylmethyl-2-thiouridine-tRNA biosynthesis. It participates in cofactor biosynthesis; molybdopterin biosynthesis. Its function is as follows. Plays a central role in 2-thiolation of mcm(5)S(2)U at tRNA wobble positions of cytosolic tRNA(Lys), tRNA(Glu) and tRNA(Gln). Also essential during biosynthesis of the molybdenum cofactor. Acts by mediating the C-terminal thiocarboxylation of sulfur carriers URM1 and MOCS2A. Its N-terminus first activates URM1 and MOCS2A as acyl-adenylates (-COAMP), then the persulfide sulfur on the catalytic cysteine is transferred to URM1 and MOCS2A to form thiocarboxylation (-COSH) of their C-terminus. The reaction probably involves hydrogen sulfide that is generated from the persulfide intermediate and that acts as a nucleophile towards URM1 and MOCS2A. Subsequently, a transient disulfide bond is formed. Does not use thiosulfate as sulfur donor; NFS1 probably acting as a sulfur donor for thiocarboxylation reactions. The polypeptide is Adenylyltransferase and sulfurtransferase MOCS3-2 (Zea mays (Maize)).